An 875-amino-acid polypeptide reads, in one-letter code: Probable ATP-dependent RNA helicase DDX10 (875 aa).

Positions 1–43 are disordered; sequence MGKTANSPGSGARPDPVRSFNRWKKKHSHRQNKKKQLRKQLKK. Thr4 carries the phosphothreonine modification. Ser7 is modified (phosphoserine). The span at 21–41 shows a compositional bias: basic residues; sequence NRWKKKHSHRQNKKKQLRKQL. Residues 69-97 carry the Q motif motif; the sequence is TRFSDFPLSKKTLKGLQEAQYRLVTEIQK. Residues 89–91, Gln96, and 113–120 each bind ATP; these read YRL and AKTGSGKT. Residues 100–274 form the Helicase ATP-binding domain; the sequence is IGLALQGKDV…RLSLKNPEYV (175 aa). The DEAD box signature appears at 222-225; that stretch reads DEAD. Positions 287 to 448 constitute a Helicase C-terminal domain; sequence TLEQNYIVCE…EIKINPEKLI (162 aa). Ser539 carries the post-translational modification Phosphoserine. An N6-acetyllysine modification is found at Lys555. The tract at residues 562–631 is disordered; the sequence is GGKRLEGTEH…QFLDRDEEEE (70 aa). A compositionally biased stretch (basic and acidic residues) spans 564-575; the sequence is KRLEGTEHRQDN. Residue Thr577 is modified to Phosphothreonine. Positions 577–593 are enriched in acidic residues; the sequence is TGNEEQEEEEDDEEEME. The span at 603–613 shows a compositional bias: polar residues; that stretch reads QAPSLPNTSEA. Lys649 participates in a covalent cross-link: Glycyl lysine isopeptide (Lys-Gly) (interchain with G-Cter in SUMO2). The interval 703–850 is disordered; that stretch reads MQKSAIKDAE…HNRKKARWDT (148 aa). Residues 727–741 show a composition bias toward basic and acidic residues; it reads ERLQEEDKFDKEEYR. Positions 742–751 are enriched in basic residues; that stretch reads KKIKAKHREK. Residues 752 to 771 show a composition bias toward basic and acidic residues; sequence RLKEREARREANKRQAKAKD. Positions 772–790 are enriched in acidic residues; that stretch reads EEEAFLDWSDDDDDDDDGF. Ser780 is modified (phosphoserine). Residues 812–821 show a composition bias toward basic and acidic residues; that stretch reads MENKISDTKK. The residue at position 831 (Ser831) is a Phosphoserine.

This sequence belongs to the DEAD box helicase family. DDX10/DBP4 subfamily. In terms of assembly, interacts with AIM2; this interaction promotes AIM2 stability. Interacts with SCNA; this interaction causes DDX10 mislocalization to the nucleoplasm and cytoplasmic inclusions. High in testis but widely expressed.

Its subcellular location is the cytoplasm. The protein localises to the nucleus. The protein resides in the nucleolus. It catalyses the reaction ATP + H2O = ADP + phosphate + H(+). Putative ATP-dependent RNA helicase that plays various role in innate immunity or inflammation. Plays a role in the enhancement of AIM2-induced inflammasome activation by interacting with AIM2 and stabilizing its protein level. Negatively regulates viral infection by promoting interferon beta production and interferon stimulated genes/ISGs expression. In Homo sapiens (Human), this protein is Probable ATP-dependent RNA helicase DDX10 (DDX10).